Consider the following 110-residue polypeptide: Red pigment-concentrating prohormone (110 aa).

The signal sequence occupies residues 1-25 (MVRRTGVTLLVVALVVVALVSSVSA). Glutamine 26 is subject to Pyrrolidone carboxylic acid. Tryptophan amide is present on tryptophan 33.

It belongs to the AKH/HRTH/RPCH family.

The protein localises to the secreted. This hormone adapts the animal to light backgrounds by stimulating concentration of the pigment of its red body-chromatophores. The chain is Red pigment-concentrating prohormone from Carcinus maenas (Common shore crab).